The primary structure comprises 206 residues: Small ribosomal subunit protein uS4 (206 aa).

The S4 RNA-binding domain maps to 96–158 (GRLDNVVYRM…AKQQSRIKAA (63 aa)).

Belongs to the universal ribosomal protein uS4 family. Part of the 30S ribosomal subunit. Contacts protein S5. The interaction surface between S4 and S5 is involved in control of translational fidelity.

Its function is as follows. One of the primary rRNA binding proteins, it binds directly to 16S rRNA where it nucleates assembly of the body of the 30S subunit. Functionally, with S5 and S12 plays an important role in translational accuracy. This chain is Small ribosomal subunit protein uS4, found in Aliivibrio fischeri (strain ATCC 700601 / ES114) (Vibrio fischeri).